The sequence spans 717 residues: Ribosomal RNA large subunit methyltransferase K/L (717 aa).

Residues 44 to 155 (DAYKVCIYSY…KQFVNVFLCL (112 aa)) enclose the THUMP domain.

The protein belongs to the methyltransferase superfamily. RlmKL family.

It localises to the cytoplasm. The catalysed reaction is guanosine(2445) in 23S rRNA + S-adenosyl-L-methionine = N(2)-methylguanosine(2445) in 23S rRNA + S-adenosyl-L-homocysteine + H(+). It catalyses the reaction guanosine(2069) in 23S rRNA + S-adenosyl-L-methionine = N(2)-methylguanosine(2069) in 23S rRNA + S-adenosyl-L-homocysteine + H(+). Its function is as follows. Specifically methylates the guanine in position 2445 (m2G2445) and the guanine in position 2069 (m7G2069) of 23S rRNA. The polypeptide is Ribosomal RNA large subunit methyltransferase K/L (Francisella tularensis subsp. holarctica (strain FTNF002-00 / FTA)).